A 1132-amino-acid chain; its full sequence is DNA-directed RNA polymerase I subunit RPA2 (1132 aa).

The C4-type zinc finger occupies 1067-1098; it reads CMDCGSLLSPLLEKPPPNWSATRHRKTICLLC.

It belongs to the RNA polymerase beta chain family. In terms of assembly, component of the RNA polymerase I (Pol I) complex consisting of at least 13 subunits.

The protein resides in the nucleus. The protein localises to the nucleolus. It localises to the chromosome. It carries out the reaction RNA(n) + a ribonucleoside 5'-triphosphate = RNA(n+1) + diphosphate. Functionally, DNA-dependent RNA polymerase catalyzes the transcription of DNA into RNA using the four ribonucleoside triphosphates as substrates. Second largest core component of RNA polymerase I which synthesizes ribosomal RNA precursors. Proposed to contribute to the polymerase catalytic activity and forms the polymerase active center together with the largest subunit. Pol I is composed of mobile elements and RPA2 is part of the core element with the central large cleft and probably a clamp element that moves to open and close the cleft. This is DNA-directed RNA polymerase I subunit RPA2 (polr1b) from Danio rerio (Zebrafish).